The following is a 156-amino-acid chain: Small ribosomal subunit protein uS7c (156 aa).

It belongs to the universal ribosomal protein uS7 family. Part of the 30S ribosomal subunit.

The protein localises to the plastid. It localises to the chloroplast. In terms of biological role, one of the primary rRNA binding proteins, it binds directly to 16S rRNA where it nucleates assembly of the head domain of the 30S subunit. The protein is Small ribosomal subunit protein uS7c (rps7) of Cyanidium caldarium (Red alga).